The primary structure comprises 94 residues: MVKRKNSDNSGTVAQGNYEAKVAEIEAIISRIESGELELETVFEQFANAVQYLRQCDTFLQQRQQQIDLLIETLNEQDGDQIPRVSNDGIEPKK.

The protein belongs to the XseB family. In terms of assembly, heterooligomer composed of large and small subunits.

It localises to the cytoplasm. It carries out the reaction Exonucleolytic cleavage in either 5'- to 3'- or 3'- to 5'-direction to yield nucleoside 5'-phosphates.. Its function is as follows. Bidirectionally degrades single-stranded DNA into large acid-insoluble oligonucleotides, which are then degraded further into small acid-soluble oligonucleotides. This is Exodeoxyribonuclease 7 small subunit from Trichormus variabilis (strain ATCC 29413 / PCC 7937) (Anabaena variabilis).